We begin with the raw amino-acid sequence, 192 residues long: Orotate phosphoribosyltransferase (192 aa).

5-phospho-alpha-D-ribose 1-diphosphate-binding positions include R102, K103, K106, and E129 to S137. Orotate contacts are provided by T133 and R161.

This sequence belongs to the purine/pyrimidine phosphoribosyltransferase family. PyrE subfamily. As to quaternary structure, homodimer. The cofactor is Mg(2+).

The enzyme catalyses orotidine 5'-phosphate + diphosphate = orotate + 5-phospho-alpha-D-ribose 1-diphosphate. Its pathway is pyrimidine metabolism; UMP biosynthesis via de novo pathway; UMP from orotate: step 1/2. Its function is as follows. Catalyzes the transfer of a ribosyl phosphate group from 5-phosphoribose 1-diphosphate to orotate, leading to the formation of orotidine monophosphate (OMP). The protein is Orotate phosphoribosyltransferase of Prochlorococcus marinus (strain SARG / CCMP1375 / SS120).